The following is a 151-amino-acid chain: Transcriptional repressor NrdR (151 aa).

Residues 3–34 fold into a zinc finger; it reads CPHCGNCDDKVMESRTLAQGDCIRRRRECLAC. Positions 49–141 constitute an ATP-cone domain; the sequence is FMVIKKDGRR…VYKQFSNLDE (93 aa).

It belongs to the NrdR family. The cofactor is Zn(2+).

In terms of biological role, negatively regulates transcription of bacterial ribonucleotide reductase nrd genes and operons by binding to NrdR-boxes. In Treponema denticola (strain ATCC 35405 / DSM 14222 / CIP 103919 / JCM 8153 / KCTC 15104), this protein is Transcriptional repressor NrdR.